The sequence spans 375 residues: Saccharopine dehydrogenase [NAD(+), L-lysine-forming] (375 aa).

Residues R18 and K78 each contribute to the L-saccharopine site. Residue K78 is the Proton acceptor of the active site. The active-site Proton donor is H96. Q101 lines the L-saccharopine pocket. Position 130 (R130) interacts with NAD(+). Positions 131 and 135 each coordinate L-saccharopine. NAD(+) is bound by residues 203 to 204 (GR), D227, T231, Y252, and V279. Cysteines 205 and 250 form a disulfide. 280–282 (SAD) is a binding site for L-saccharopine. Residue 322 to 325 (IDHL) participates in NAD(+) binding.

Belongs to the AlaDH/PNT family. Monomer.

It carries out the reaction L-saccharopine + NAD(+) + H2O = L-lysine + 2-oxoglutarate + NADH + H(+). It functions in the pathway amino-acid biosynthesis; L-lysine biosynthesis via AAA pathway; L-lysine from L-alpha-aminoadipate (fungal route): step 3/3. Its function is as follows. Catalyzes the NAD(+)-dependent cleavage of saccharopine to L-lysine and 2-oxoglutarate, the final step in the alpha-aminoadipate (AAA) pathway for lysin biosynthesis. In Emericella nidulans (strain FGSC A4 / ATCC 38163 / CBS 112.46 / NRRL 194 / M139) (Aspergillus nidulans), this protein is Saccharopine dehydrogenase [NAD(+), L-lysine-forming].